Here is a 150-residue protein sequence, read N- to C-terminus: Cytochrome b5 type B (150 aa).

Positions 1-15 (MSGSMATAEASGSDG) are excised as a propeptide. The tract at residues 1–20 (MSGSMATAEASGSDGKGQEV) is disordered. Serine 23 is subject to Phosphoserine. The Cytochrome b5 heme-binding domain occupies 24-100 (VTYYRLEEVA…LKQYYIGDIH (77 aa)). An N6-acetyllysine modification is found at lysine 34. Serine 37 is subject to Phosphoserine. At lysine 39 the chain carries N6-methyllysine. Heme-binding residues include histidine 59 and histidine 83. At serine 84 the chain carries Phosphoserine. The helical transmembrane segment at 123 to 140 (WAYWILPIIGAVLLGFLY) threads the bilayer.

This sequence belongs to the cytochrome b5 family. As to quaternary structure, component of a complex composed of cytochrome b5, NADH-cytochrome b5 reductase (CYB5R3) and MTARC2.

Its subcellular location is the mitochondrion outer membrane. Functionally, cytochrome b5 is a membrane-bound hemoprotein functioning as an electron carrier for several membrane-bound oxygenases. This chain is Cytochrome b5 type B (CYB5B), found in Homo sapiens (Human).